We begin with the raw amino-acid sequence, 237 residues long: MLSCFWFFSKHISSALMSLPRVLHRFTAPQCLASRYPLGPLLASPRRLLASVASSQDSTRPSRVRQNFHPDSEAAINRQINLELYASYVYLSMAYYFSRDDVALYNFSKYFLRQSLEEREHAEKLMKLQNQRGGRICLQDIKKPDKDDWECGLRAMECALLLEKNVNQSLLDLHTLASEKGDPHLCDFLETHYLHEQVKSIKELGDHVHNLVTMGAPAAGLAEYLFDKHTLGSESKH.

The N-terminal 49 residues, 1–49, are a transit peptide targeting the mitochondrion; the sequence is MLSCFWFFSKHISSALMSLPRVLHRFTAPQCLASRYPLGPLLASPRRLL. The region spanning 66 to 215 is the Ferritin-like diiron domain; that stretch reads QNFHPDSEAA…DHVHNLVTMG (150 aa). The Fe cation site is built by Glu83, Glu118, His121, Glu163, and Gln197.

This sequence belongs to the ferritin family. Homooligomer of 24 subunits. The functional molecule is roughly spherical and contains a central cavity into which the polymeric mineral iron core is deposited.

It is found in the mitochondrion. The catalysed reaction is 4 Fe(2+) + O2 + 4 H(+) = 4 Fe(3+) + 2 H2O. Functionally, catalyzes the oxidation of ferrous iron(II) to ferric iron(III) and stores iron in a soluble, non-toxic, readily available form. Important for iron homeostasis. Iron is taken up in the ferrous form and deposited as ferric hydroxides after oxidation. This Mus musculus (Mouse) protein is Ferritin, mitochondrial.